Consider the following 203-residue polypeptide: Auxin-induced protein 22E (203 aa).

The EAR-like (transcriptional repression) signature appears at 15 to 19 (LRLGL). Residues 15 to 77 (LRLGLPGSDE…DHNEDSVQPA (63 aa)) are disordered. Basic and acidic residues predominate over residues 43-52 (SSPELEESRC). The span at 58–67 (SDSSDSTTTS) shows a compositional bias: low complexity. A PB1 domain is found at 107–199 (GMYLKVSMAG…RIIKGSEAKG (93 aa)).

The protein belongs to the Aux/IAA family. Homodimers and heterodimers.

The protein localises to the nucleus. In terms of biological role, aux/IAA proteins are short-lived transcriptional factors that function as repressors of early auxin response genes at low auxin concentrations. Repression is thought to result from the interaction with auxin response factors (ARFs), proteins that bind to the auxin-responsive promoter element (AuxRE). Formation of heterodimers with ARF proteins may alter their ability to modulate early auxin response genes expression. In Vigna radiata var. radiata (Mung bean), this protein is Auxin-induced protein 22E (AUX22E).